We begin with the raw amino-acid sequence, 258 residues long: Phosphoribosylaminoimidazole-succinocarboxamide synthase (258 aa).

It belongs to the SAICAR synthetase family.

It carries out the reaction 5-amino-1-(5-phospho-D-ribosyl)imidazole-4-carboxylate + L-aspartate + ATP = (2S)-2-[5-amino-1-(5-phospho-beta-D-ribosyl)imidazole-4-carboxamido]succinate + ADP + phosphate + 2 H(+). It functions in the pathway purine metabolism; IMP biosynthesis via de novo pathway; 5-amino-1-(5-phospho-D-ribosyl)imidazole-4-carboxamide from 5-amino-1-(5-phospho-D-ribosyl)imidazole-4-carboxylate: step 1/2. The sequence is that of Phosphoribosylaminoimidazole-succinocarboxamide synthase from Sphingopyxis alaskensis (strain DSM 13593 / LMG 18877 / RB2256) (Sphingomonas alaskensis).